A 94-amino-acid chain; its full sequence is UPF0337 protein NE2439 (94 aa).

Residues K74 to T94 are disordered. Positions K85–T94 are enriched in basic residues.

It belongs to the UPF0337 (CsbD) family.

The chain is UPF0337 protein NE2439 from Nitrosomonas europaea (strain ATCC 19718 / CIP 103999 / KCTC 2705 / NBRC 14298).